Consider the following 290-residue polypeptide: 4-hydroxy-tetrahydrodipicolinate synthase (290 aa).

Thr44 contacts pyruvate. The active-site Proton donor/acceptor is Tyr132. Residue Lys160 is the Schiff-base intermediate with substrate of the active site. Residue Ile202 participates in pyruvate binding.

It belongs to the DapA family. As to quaternary structure, homotetramer; dimer of dimers.

Its subcellular location is the cytoplasm. It catalyses the reaction L-aspartate 4-semialdehyde + pyruvate = (2S,4S)-4-hydroxy-2,3,4,5-tetrahydrodipicolinate + H2O + H(+). The protein operates within amino-acid biosynthesis; L-lysine biosynthesis via DAP pathway; (S)-tetrahydrodipicolinate from L-aspartate: step 3/4. Catalyzes the condensation of (S)-aspartate-beta-semialdehyde [(S)-ASA] and pyruvate to 4-hydroxy-tetrahydrodipicolinate (HTPA). The polypeptide is 4-hydroxy-tetrahydrodipicolinate synthase (Cereibacter sphaeroides (strain ATCC 17025 / ATH 2.4.3) (Rhodobacter sphaeroides)).